Reading from the N-terminus, the 342-residue chain is Phosphate acyltransferase (342 aa).

It belongs to the PlsX family. As to quaternary structure, homodimer. Probably interacts with PlsY.

It is found in the cytoplasm. The catalysed reaction is a fatty acyl-[ACP] + phosphate = an acyl phosphate + holo-[ACP]. The protein operates within lipid metabolism; phospholipid metabolism. Its function is as follows. Catalyzes the reversible formation of acyl-phosphate (acyl-PO(4)) from acyl-[acyl-carrier-protein] (acyl-ACP). This enzyme utilizes acyl-ACP as fatty acyl donor, but not acyl-CoA. This Shewanella sp. (strain ANA-3) protein is Phosphate acyltransferase.